The following is a 177-amino-acid chain: ATP synthase subunit delta (177 aa).

It belongs to the ATPase delta chain family. F-type ATPases have 2 components, F(1) - the catalytic core - and F(0) - the membrane proton channel. F(1) has five subunits: alpha(3), beta(3), gamma(1), delta(1), epsilon(1). F(0) has three main subunits: a(1), b(2) and c(10-14). The alpha and beta chains form an alternating ring which encloses part of the gamma chain. F(1) is attached to F(0) by a central stalk formed by the gamma and epsilon chains, while a peripheral stalk is formed by the delta and b chains.

It is found in the cell inner membrane. F(1)F(0) ATP synthase produces ATP from ADP in the presence of a proton or sodium gradient. F-type ATPases consist of two structural domains, F(1) containing the extramembraneous catalytic core and F(0) containing the membrane proton channel, linked together by a central stalk and a peripheral stalk. During catalysis, ATP synthesis in the catalytic domain of F(1) is coupled via a rotary mechanism of the central stalk subunits to proton translocation. In terms of biological role, this protein is part of the stalk that links CF(0) to CF(1). It either transmits conformational changes from CF(0) to CF(1) or is implicated in proton conduction. The polypeptide is ATP synthase subunit delta (Edwardsiella ictaluri (strain 93-146)).